A 423-amino-acid chain; its full sequence is AUGMIN subunit 4 (423 aa).

Positions 267 to 287 form a coiled coil; that stretch reads IEEIERDEAALREDLYSADRK.

It belongs to the HAUS4 family. Part of the augmin complex composed of 8 subunits. The complex acts on microtubules and interacts with gamma-tubulin in spindles and the phragmoplast.

Its subcellular location is the cytoplasm. It is found in the cytoskeleton. The protein localises to the spindle. The protein resides in the phragmoplast. Its function is as follows. Involved in microtubules reorganization during spindle and phragmoplast development. This is AUGMIN subunit 4 (AUG4) from Arabidopsis thaliana (Mouse-ear cress).